The primary structure comprises 51 residues: Insulin-2 (51 aa).

3 disulfides stabilise this stretch: cysteine 8–cysteine 37, cysteine 20–cysteine 50, and cysteine 36–cysteine 41.

The protein belongs to the insulin family. Heterodimer of a B chain and an A chain linked by two disulfide bonds.

The protein localises to the secreted. In terms of biological role, insulin decreases blood glucose concentration. It increases cell permeability to monosaccharides, amino acids and fatty acids. It accelerates glycolysis, the pentose phosphate cycle, and glycogen synthesis in liver. This is Insulin-2 from Katsuwonus pelamis (Skipjack tuna).